The sequence spans 196 residues: 3-isopropylmalate dehydratase small subunit (196 aa).

The protein belongs to the LeuD family. LeuD type 1 subfamily. In terms of assembly, heterodimer of LeuC and LeuD.

The catalysed reaction is (2R,3S)-3-isopropylmalate = (2S)-2-isopropylmalate. It participates in amino-acid biosynthesis; L-leucine biosynthesis; L-leucine from 3-methyl-2-oxobutanoate: step 2/4. Catalyzes the isomerization between 2-isopropylmalate and 3-isopropylmalate, via the formation of 2-isopropylmaleate. This Herpetosiphon aurantiacus (strain ATCC 23779 / DSM 785 / 114-95) protein is 3-isopropylmalate dehydratase small subunit.